Here is a 347-residue protein sequence, read N- to C-terminus: Histone deacetylase 11 (347 aa).

The segment at 14-318 (KRWPIVYSPR…ARIIADSILN (305 aa)) is histone deacetylase. H143 is an active-site residue.

This sequence belongs to the histone deacetylase family. As to quaternary structure, interacts with HDAC6.

It is found in the nucleus. The enzyme catalyses N(6)-acetyl-L-lysyl-[histone] + H2O = L-lysyl-[histone] + acetate. Its function is as follows. Responsible for the deacetylation of lysine residues on the N-terminal part of the core histones (H2A, H2B, H3 and H4). Histone deacetylation gives a tag for epigenetic repression and plays an important role in transcriptional regulation, cell cycle progression and developmental events. Histone deacetylases act via the formation of large multiprotein complexes. The sequence is that of Histone deacetylase 11 (Hdac11) from Mus musculus (Mouse).